The following is a 178-amino-acid chain: Peptide deformylase (178 aa).

Fe cation is bound by residues C102 and H144. The active site involves E145. H148 is a Fe cation binding site.

It belongs to the polypeptide deformylase family. Fe(2+) is required as a cofactor.

The catalysed reaction is N-terminal N-formyl-L-methionyl-[peptide] + H2O = N-terminal L-methionyl-[peptide] + formate. In terms of biological role, removes the formyl group from the N-terminal Met of newly synthesized proteins. Requires at least a dipeptide for an efficient rate of reaction. N-terminal L-methionine is a prerequisite for activity but the enzyme has broad specificity at other positions. The sequence is that of Peptide deformylase from Leptospira borgpetersenii serovar Hardjo-bovis (strain JB197).